Consider the following 64-residue polypeptide: Large ribosomal subunit protein bL35c (64 aa).

It belongs to the bacterial ribosomal protein bL35 family.

Its subcellular location is the plastid. The protein resides in the chloroplast. The chain is Large ribosomal subunit protein bL35c from Cyanidium caldarium (Red alga).